Here is a 157-residue protein sequence, read N- to C-terminus: Iron-sulfur cluster repair protein DnrN (157 aa).

The protein belongs to the RIC family.

The protein localises to the cytoplasm. Its function is as follows. Di-iron-containing protein involved in the repair of iron-sulfur clusters damaged by oxidative and nitrosative stress conditions. Required to repair damage caused by nitric oxide to FNR and NsrR transcription factors. This chain is Iron-sulfur cluster repair protein DnrN (dnrN), found in Neisseria gonorrhoeae.